The primary structure comprises 802 residues: Cullin-4 (802 aa).

2 stretches are compositionally biased toward low complexity: residues 1 to 33 (MNFN…NNNN) and 656 to 676 (STSS…ASGS). Disordered regions lie at residues 1–43 (MNFN…SLAG) and 656–686 (STSS…GGAT). The 61-residue stretch at 734-794 (DRQYQVDAAI…KEYLCRDPEN (61 aa)) folds into the Cullin neddylation domain. Lys748 is covalently cross-linked (Glycyl lysine isopeptide (Lys-Gly) (interchain with G-Cter in NEDD8)).

This sequence belongs to the cullin family. Neddylated. Deneddylated via its interaction with the COP9 signalosome (CSN) complex.

Its pathway is protein modification; protein ubiquitination. In terms of biological role, probable core component of cullin-based SCF-like E3 ubiquitin-protein ligase complexes which mediate the ubiquitination and subsequent proteasomal degradation of target proteins. The E3 ubiquitin-protein ligase activity of the complex is dependent on the neddylation of the cullin subunit. The protein is Cullin-4 (culD) of Dictyostelium discoideum (Social amoeba).